The sequence spans 186 residues: Large ribosomal subunit protein uL15 (186 aa).

The segment at 1 to 48 (MDLSSLRPAKGAVKARKRVGRGPGSGNGTTAGKGNKGQQSRSGYQRPV) is disordered. The span at 21-35 (RGPGSGNGTTAGKGN) shows a compositional bias: gly residues.

This sequence belongs to the universal ribosomal protein uL15 family. Part of the 50S ribosomal subunit.

Functionally, binds to the 23S rRNA. The sequence is that of Large ribosomal subunit protein uL15 from Chlorobaculum tepidum (strain ATCC 49652 / DSM 12025 / NBRC 103806 / TLS) (Chlorobium tepidum).